Here is a 68-residue protein sequence, read N- to C-terminus: Conotoxin Vx2 (68 aa).

The N-terminal stretch at 1-20 is a signal peptide; the sequence is MMSKLGVLVTICLLLFPLTA. Positions 21–47 are excised as a propeptide; sequence LPLDGDQPADHPAKRTQDHNLASPISA. 3 cysteine pairs are disulfide-bonded: Cys55/Cys68, Cys56/Cys61, and Cys57/Cys65.

The protein belongs to the conotoxin M superfamily. Expressed by the venom duct.

It localises to the secreted. In vivo, elicits a series of symptoms, such as being sedative, tail stiffening and twisted jumping, when injected intracranially into mice. The sequence is that of Conotoxin Vx2 from Conus vexillum (Flag cone).